Here is a 357-residue protein sequence, read N- to C-terminus: 3-isopropylmalate dehydrogenase (357 aa).

Gly76–Glu89 contacts NAD(+). 4 residues coordinate substrate: Arg96, Arg106, Arg134, and Asp224. 3 residues coordinate Mg(2+): Asp224, Asp248, and Asp252. Position 282–294 (Gly282–Asn294) interacts with NAD(+).

It belongs to the isocitrate and isopropylmalate dehydrogenases family. LeuB type 1 subfamily. In terms of assembly, homodimer. Requires Mg(2+) as cofactor. It depends on Mn(2+) as a cofactor.

The protein localises to the cytoplasm. It carries out the reaction (2R,3S)-3-isopropylmalate + NAD(+) = 4-methyl-2-oxopentanoate + CO2 + NADH. It participates in amino-acid biosynthesis; L-leucine biosynthesis; L-leucine from 3-methyl-2-oxobutanoate: step 3/4. Its function is as follows. Catalyzes the oxidation of 3-carboxy-2-hydroxy-4-methylpentanoate (3-isopropylmalate) to 3-carboxy-4-methyl-2-oxopentanoate. The product decarboxylates to 4-methyl-2 oxopentanoate. The polypeptide is 3-isopropylmalate dehydrogenase (Saccharophagus degradans (strain 2-40 / ATCC 43961 / DSM 17024)).